A 67-amino-acid chain; its full sequence is Bombesin (67 aa).

The first 30 residues, 1-30 (MSLLPAVKVLPLGYLGIVLVFSLILRSAMV), serve as a signal peptide directing secretion. Residues 31 to 49 (DFIQDAGKLERIDTYKREA) constitute a propeptide that is removed on maturation. A Pyrrolidone carboxylic acid modification is found at Gln50. At Met64 the chain carries Methionine amide.

This sequence belongs to the bombesin/neuromedin-B/ranatensin family. In terms of tissue distribution, expressed by the skin dorsal glands.

It localises to the secreted. In terms of biological role, stimulates smooth muscle contraction in isolated rat stomach strip. The sequence is that of Bombesin from Sanguirana varians (Palawan frog).